Reading from the N-terminus, the 189-residue chain is Flavin prenyltransferase UbiX (189 aa).

FMN-binding positions include 10 to 12, serine 37, 88 to 91, and arginine 123; these read GAS and SIKT. Positions 153 and 169 each coordinate dimethylallyl phosphate.

Belongs to the UbiX/PAD1 family.

It carries out the reaction dimethylallyl phosphate + FMNH2 = prenylated FMNH2 + phosphate. Its pathway is cofactor biosynthesis; ubiquinone biosynthesis. Its function is as follows. Flavin prenyltransferase that catalyzes the synthesis of the prenylated FMN cofactor (prenyl-FMN) for 4-hydroxy-3-polyprenylbenzoic acid decarboxylase UbiD. The prenyltransferase is metal-independent and links a dimethylallyl moiety from dimethylallyl monophosphate (DMAP) to the flavin N5 and C6 atoms of FMN. The sequence is that of Flavin prenyltransferase UbiX from Salmonella typhi.